We begin with the raw amino-acid sequence, 272 residues long: MKVVMTTKVDLASMNIREKLIENFGFKEDELLFDGNPVYQKDDVVILTTNQEMIYYDGLDRAIERQTGIKPEIIAFASRHSSKQKLPALTTHVTGNWGGALYGGKDESLAIAQPSAMKLALLKMNELNDLGWTVCYEATHHGPSELDVPSFFIEIGSSEEEWVNDRAGEIVAETIIYVLENYQNSKFKVAVGIGGGHYAPKQTKRALQTDLAFGHIAPKYAHPLSKELLLKAIERTAERVDAIYVDWKGSKGETRQMARAVAEELGLEFIRD.

It belongs to the DtdA deacylase family. Monomer. Zn(2+) is required as a cofactor.

It catalyses the reaction a D-aminoacyl-tRNA + H2O = a tRNA + a D-alpha-amino acid + H(+). The catalysed reaction is glycyl-tRNA(Ala) + H2O = tRNA(Ala) + glycine + H(+). Its function is as follows. D-aminoacyl-tRNA deacylase with broad substrate specificity. By recycling D-aminoacyl-tRNA to D-amino acids and free tRNA molecules, this enzyme counteracts the toxicity associated with the formation of D-aminoacyl-tRNA entities in vivo. The polypeptide is D-aminoacyl-tRNA deacylase (Thermococcus kodakarensis (strain ATCC BAA-918 / JCM 12380 / KOD1) (Pyrococcus kodakaraensis (strain KOD1))).